Consider the following 751-residue polypeptide: Amyloid-beta precursor protein (751 aa).

An N-terminal signal peptide occupies residues 1–17 (MLPGLALLLLAAWTARA). The Extracellular segment spans residues 18–682 (LEVPTDGNAG…AEDVGSNKGA (665 aa)). Positions 28 to 123 (LLAEPQIAMF…PYRCLVGEFV (96 aa)) are GFLD subdomain. An E1 domain is found at 28 to 189 (LLAEPQIAMF…RGVEFVCCPL (162 aa)). 6 cysteine pairs are disulfide-bonded: C38–C62, C73–C117, C98–C105, C133–C187, C144–C174, and C158–C186. 96-110 (NWCKRDRKQCKTHPH) is a heparin binding site. The segment at 131-189 (DKCKFLHQERMDVCETHLHWHTVAKETCSEKSTNLHDYGMLLPCGIDKFRGVEFVCCPL) is cuBD subdomain. 3 residues coordinate Cu(2+): H147, H151, and Y168. A zinc-binding region spans residues 181 to 188 (GVEFVCCP). 3 residues coordinate Zn(2+): E183, C186, and C187. The disordered stretch occupies residues 195–284 (HVDSADAEED…TTTTTTESVE (90 aa)). S198 and S206 each carry phosphoserine; by CK1 and CK2. Sulfotyrosine is present on residues Y217 and Y262. Acidic residues predominate over residues 228 to 264 (VAEEEEVAEVEEEEADDDEDDEDGDEVEEEAEEPYEE). Positions 268-281 (RTTSIATTTTTTTE) are enriched in low complexity. Cystine bridges form between C291–C341, C300–C324, and C316–C337. The BPTI/Kunitz inhibitor domain occupies 291–341 (CSEQAETGPCRAMISRWYFDVTEGKCAPFFYGGCGGNRNNFDTEEYCMAVC). Heparin-binding stretches follow at residues 316–344 (CAPF…CGSV) and 363–428 (PGDE…QEAA). Sulfotyrosine is present on Y336. Positions 344-346 (VIP) match the OX-2 motif. In terms of domain architecture, E2 spans 355–546 (AVDKYLETPG…EEIQDEVDEL (192 aa)). The residue at position 422 (S422) is a Phosphoserine. At Y478 the chain carries Phosphotyrosine. Positions 504–521 (AAQIRSQVMTHLRVIYER) are collagen-binding. Residues N523 and N552 are each glycosylated (N-linked (GlcNAc...) asparagine). 4 residues coordinate Cu(2+): H658, Y662, H665, and H666. Zn(2+) contacts are provided by H658, Y662, H665, and H666. Residues 676-703 (VGSNKGAIIGLMVGGVVIATVIVITLVM) are interaction with PSEN1. The chain crosses the membrane as a helical span at residues 683 to 703 (IIGLMVGGVVIATVIVITLVM). Residues 704 to 751 (LKKKQYTSIHHGVVEVDAAVTPEERHLSKMQQNGYENPTYKFFEQMQN) lie on the Cytoplasmic side of the membrane. A Basolateral sorting signal motif is present at residues 705–715 (KKKQYTSIHHG). T710 bears the Phosphothreonine mark. Position 711 is a phosphoserine; by APP-kinase I (S711). Residues 713–732 (HHGVVEVDAAVTPEERHLSK) form an interaction with G(o)-alpha region. A Phosphothreonine; by CDK5 and MAPK10 modification is found at T724. The required for the interaction with KIF5B and for anterograde transport in axons stretch occupies residues 737 to 751 (GYENPTYKFFEQMQN). Y738 is subject to Phosphotyrosine; by ABL1. The short motif at 738 to 743 (YENPTY) is the YENPXY motif; contains endocytosis signal element. K744 is covalently cross-linked (Glycyl lysine isopeptide (Lys-Gly) (interchain with G-Cter in ubiquitin)).

The protein belongs to the APP family. As to quaternary structure, binds, via its C-terminus, to the PID domain of several cytoplasmic proteins, including APBB family members, the APBA family, MAPK8IP1, SHC1 and NUMB and DAB1. Binding to DAB1 inhibits its serine phosphorylation. Interacts (via NPXY motif) with DAB2 (via PID domain); the interaction is impaired by tyrosine phosphorylation of the NPXY motif. Also interacts with GPCR-like protein BPP, APPBP1, IB1, KNS2 (via its TPR domains), APPBP2 (via BaSS) and DDB1. In vitro, it binds MAPT via the MT-binding domains. Associates with microtubules in the presence of ATP and in a kinesin-dependent manner. Interacts, through a C-terminal domain, with GNAO1. Amyloid-beta protein 42 binds CHRNA7 in hippocampal neurons. Amyloid-beta associates with HADH2. Interacts with CPEB1, ANKS1B and AGER. Interacts with ITM2B. Interacts with ITM2C. Interacts with IDE. Can form homodimers; dimerization is enhanced in the presence of Cu(2+) ions. Can form homodimers; this is promoted by heparin binding. Amyloid-beta protein 40 interacts with S100A9. CTF-alpha product of APP interacts with GSAP. Isoform APP695 interacts with SORL1 (via N-terminal ectodomain); this interaction retains APP in the trans-Golgi network and reduces processing into soluble APP-alpha and amyloid-beta peptides. Isoform APP770 interacts with SORL1. The C99 fragment also interacts with SORL1. Interacts with PLD3. Interacts with VDAC1. Interacts with NSG1; could regulate APP processing. Amyloid-beta protein 42 interacts with FPR2. Interacts (via transmembrane region) with PSEN1; the interaction is direct. Interacts with LRRK2. Interacts (via cytoplasmic domain) with KIF5B. Interacts (via C-terminus) with APBB2/FE65L1 (via C-terminus). Interacts (via intracellular domain) with APBB3. In terms of processing, proteolytically processed under normal cellular conditions. Cleavage either by alpha-secretase, beta-secretase or theta-secretase leads to generation and extracellular release of soluble APP peptides, S-APP-alpha and S-APP-beta, and the retention of corresponding membrane-anchored C-terminal fragments, C80, C83 and C99. Subsequent processing of C80 and C83 by gamma-secretase yields P3 peptides. This is the major secretory pathway and is non-amyloidogenic. Alternatively, presenilin/nicastrin-mediated gamma-secretase processing of C99 releases the amyloid-beta proteins, amyloid-beta protein 40 and amyloid-beta protein 42, major components of amyloid plaques, and the cytotoxic C-terminal fragments, gamma-CTF(50), gamma-CTF(57) and gamma-CTF(59). PSEN1 cleavage is more efficient with C83 than with C99 as substrate (in vitro). Amyloid-beta protein 40 and Amyloid-beta protein 42 are cleaved by ACE. Many other minor amyloid-beta peptides, amyloid-beta 1-X peptides, are found in cerebral spinal fluid (CSF) including the amyloid-beta X-15 peptides, produced from the cleavage by alpha-secretase. Proteolytically cleaved by caspases during neuronal apoptosis. Cleavage at Asp-720 by either caspase-3, -8 or -9 results in the production of the neurotoxic C31 peptide and the increased production of amyloid-beta peptides. Post-translationally, N- and O-glycosylated. In terms of processing, phosphorylation in the C-terminal on tyrosine, threonine and serine residues is neuron-specific. Phosphorylation can affect APP processing, neuronal differentiation and interaction with other proteins. Phosphorylated on Thr-724 in neuronal cells by Cdc5 kinase and Mapk10, in dividing cells by Cdc2 kinase in a cell-cycle dependent manner with maximal levels at the G2/M phase and, in vitro, by GSK-3-beta. The Thr-724 phosphorylated form causes a conformational change which reduces binding of Fe65 family members. In dopaminergic (DA) neurons, phosphorylation on Thr-724 by LRKK2 promotes the production and the nuclear translocation of the APP intracellular domain (AICD) which induces DA neuron apoptosis. Phosphorylation on Tyr-738 is required for SHC binding. Phosphorylated in the extracellular domain by casein kinases on both soluble and membrane-bound APP. This phosphorylation is inhibited by heparin. Trophic-factor deprivation triggers the cleavage of surface APP by beta-secretase to release sAPP-beta which is further cleaved to release an N-terminal fragment of APP (N-APP). Post-translationally, amyloid-beta peptides are degraded by IDE. In terms of processing, sulfated on tyrosine residues.

The protein resides in the cell membrane. The protein localises to the membrane. Its subcellular location is the perikaryon. It localises to the cell projection. It is found in the growth cone. The protein resides in the clathrin-coated pit. The protein localises to the early endosome. Its subcellular location is the cytoplasmic vesicle. It localises to the endoplasmic reticulum. It is found in the golgi apparatus. The protein resides in the secreted. The protein localises to the cell surface. Its subcellular location is the nucleus. It localises to the cytoplasm. In terms of biological role, functions as a cell surface receptor and performs physiological functions on the surface of neurons relevant to neurite growth, neuronal adhesion and axonogenesis. Interaction between APP molecules on neighboring cells promotes synaptogenesis. Involved in cell mobility and transcription regulation through protein-protein interactions. Can promote transcription activation through binding to APBB1-KAT5 and inhibit Notch signaling through interaction with Numb. Couples to apoptosis-inducing pathways such as those mediated by G(o) and JIP. Inhibits G(o)-alpha ATPase activity. Acts as a kinesin I membrane receptor, mediating the axonal transport of beta-secretase and presenilin 1. By acting as a kinesin I membrane receptor, plays a role in axonal anterograde transport of cargo towards synapses in axons. May be involved in copper homeostasis/oxidative stress through copper ion reduction. In vitro, copper-metallated APP induces neuronal death directly or is potentiated through Cu(2+)-mediated low-density lipoprotein oxidation. Can regulate neurite outgrowth through binding to components of the extracellular matrix such as heparin and collagen I and IV. Induces a AGER-dependent pathway that involves activation of p38 MAPK, resulting in internalization of amyloid-beta peptide and mitochondrial dysfunction in cultured cortical neurons. Provides Cu(2+) ions for GPC1 which are required for release of nitric oxide (NO) and subsequent degradation of the heparan sulfate chains on GPC1. Its function is as follows. Amyloid-beta peptides are lipophilic metal chelators with metal-reducing activity. Binds transient metals such as copper, zinc and iron. Functionally, the gamma-CTF peptides as well as the caspase-cleaved peptides, including C31, are potent enhancers of neuronal apoptosis. In Saimiri sciureus (Common squirrel monkey), this protein is Amyloid-beta precursor protein.